Consider the following 429-residue polypeptide: MAQPGTLNLNNEVVKMRKEVKRIRVLVIRKLVRSVGRLKSKKGTEDALLKNQRRAQRLLEEIHAMKELKPDMVTKSALGDDINFEKICKKPDSTATERAIARLAVHPLLKKKIDVLKAAVQAFKEARQNVTEVESSKNASEDNHSKNTLYSNDNGSNLQREGTVISEQEVKETKILAKKPIHNSKEKIAKMEHGPKAVTIANSPSKPSEKDSVISLESQKTPADPKLKTLSQTKKNKESDSSLSGNSDGGEELCEEEKEYFDDSTEERFYKQSSMSEDSDSGDDFFIGKVRRTRKKESSCHSSVKEQKRLEKVFLKEDTGETHGDTRNDKTKPSTETRKLESVFFHSLSGSKSSRRNFKEQAPKTRSLDFPQNEPQFKNQFNKKLSRRLENTKQQLQLPLHPSWEASRRRKEQQSNIAVFQGKKITFDD.

Residue A2 is modified to N-acetylalanine. Coiled coils occupy residues 42–67 (KGTEDALLKNQRRAQRLLEEIHAMKE) and 108–144 (LLKKKIDVLKAAVQAFKEARQNVTEVESSKNASEDNH). Composition is skewed to polar residues over residues 128–138 (QNVTEVESSKN) and 146–160 (KNTLYSNDNGSNLQR). Disordered stretches follow at residues 128–285 (QNVT…GDDF) and 311–429 (EKVF…TFDD). Positions 183-195 (NSKEKIAKMEHGP) are enriched in basic and acidic residues. K190 is covalently cross-linked (Glycyl lysine isopeptide (Lys-Gly) (interchain with G-Cter in SUMO2)). Residues S203, S205, S264, S279, and S281 each carry the phosphoserine modification. Positions 249-265 (GGEELCEEEKEYFDDST) are enriched in acidic residues. Over residues 311–341 (EKVFLKEDTGETHGDTRNDKTKPSTETRKLE) the composition is skewed to basic and acidic residues. Residue K316 forms a Glycyl lysine isopeptide (Lys-Gly) (interchain with G-Cter in SUMO2) linkage. Residues S349, S351, and S367 each carry the phosphoserine modification. Residues 357-367 (NFKEQAPKTRS) are compositionally biased toward basic and acidic residues. Positions 373–383 (NEPQFKNQFNK) are enriched in polar residues.

In terms of assembly, interacts with SRF. Forms complexes with SRF and SRF cofactors ARID2, MYOCD and NKX2-5. Interacts with the N-terminus of SLC2A4.

Its subcellular location is the cytoplasm. The protein localises to the perinuclear region. Its function is as follows. May be involved in regulating transcriptional activation of cardiac genes during the aging process. May play a role in biosynthesis and/or processing of SLC2A4 in adipose cells. In Pongo abelii (Sumatran orangutan), this protein is Serum response factor-binding protein 1.